Reading from the N-terminus, the 189-residue chain is Histidinol-phosphate aminotransferase (189 aa).

The protein belongs to the class-II pyridoxal-phosphate-dependent aminotransferase family. Histidinol-phosphate aminotransferase subfamily. In terms of assembly, homodimer. Pyridoxal 5'-phosphate is required as a cofactor.

It carries out the reaction L-histidinol phosphate + 2-oxoglutarate = 3-(imidazol-4-yl)-2-oxopropyl phosphate + L-glutamate. The protein operates within amino-acid biosynthesis; L-histidine biosynthesis; L-histidine from 5-phospho-alpha-D-ribose 1-diphosphate: step 7/9. This Thiocapsa roseopersicina protein is Histidinol-phosphate aminotransferase (hisC).